The sequence spans 334 residues: Probable aminoacyl tRNA synthase complex-interacting multifunctional protein 2 (334 aa).

The 48-residue stretch at 280-327 (LDKRLQKQQYFGGSQMSVADVGVYSSLIRMPAVTEKDLTPALVAWRKR) folds into the GST C-terminal domain.

Component of the aminoacyl-tRNA synthase complex which is comprised of a bifunctional glutamyl-prolyl-tRNA synthase, the monospecific isoleucyl, leucyl, glutaminyl, methionyl, lysyl, arginyl and aspartyl-tRNA synthases, and three auxiliary proteins.

It localises to the cytoplasm. Its subcellular location is the cytosol. It is found in the nucleus. Its function is as follows. Required for assembly and stability of the aminoacyl-tRNA synthase complex. This chain is Probable aminoacyl tRNA synthase complex-interacting multifunctional protein 2, found in Drosophila melanogaster (Fruit fly).